The following is a 123-amino-acid chain: Small ribosomal subunit protein uS13 (123 aa).

The tract at residues 97–123 (PVRGQRTKTNARTRKGPRKTVGVRRKK) is disordered.

It belongs to the universal ribosomal protein uS13 family. As to quaternary structure, part of the 30S ribosomal subunit. Forms a loose heterodimer with protein S19. Forms two bridges to the 50S subunit in the 70S ribosome.

Its function is as follows. Located at the top of the head of the 30S subunit, it contacts several helices of the 16S rRNA. In the 70S ribosome it contacts the 23S rRNA (bridge B1a) and protein L5 of the 50S subunit (bridge B1b), connecting the 2 subunits; these bridges are implicated in subunit movement. Contacts the tRNAs in the A and P-sites. The protein is Small ribosomal subunit protein uS13 of Pelotomaculum thermopropionicum (strain DSM 13744 / JCM 10971 / SI).